Consider the following 355-residue polypeptide: Ubiquinone biosynthesis protein COQ4 homolog, mitochondrial (355 aa).

Positions 134, 135, 138, and 150 each coordinate Zn(2+).

Belongs to the COQ4 family. In terms of assembly, component of a multi-subunit COQ enzyme complex. It depends on Zn(2+) as a cofactor.

Its subcellular location is the mitochondrion inner membrane. The enzyme catalyses a 4-hydroxy-3-methoxy-5-(all-trans-polyprenyl)benzoate + H(+) = a 2-methoxy-6-(all-trans-polyprenyl)phenol + CO2. Its pathway is cofactor biosynthesis; ubiquinone biosynthesis. Lyase that catalyzes the C1-decarboxylation of 4-hydroxy-3-methoxy-5-(all-trans-polyprenyl)benzoic acid into 2-methoxy-6-(all-trans-polyprenyl)phenol during ubiquinone biosynthesis. The chain is Ubiquinone biosynthesis protein COQ4 homolog, mitochondrial from Plasmodium yoelii yoelii.